A 379-amino-acid polypeptide reads, in one-letter code: Gonadotropin-releasing hormone II receptor (379 aa).

Topologically, residues 1 to 40 are extracellular; that stretch reads MSAGNGTPWGSAVGEEAWAGSGVAVEGSELPTFSTAAKVR. Residues 41-60 form a helical membrane-spanning segment; sequence VGVTIVLFVSSAGGNLAVLW. The Cytoplasmic portion of the chain corresponds to 61–76; sequence SVTRPQPSQLRPSPVR. Residues 77 to 96 traverse the membrane as a helical segment; the sequence is TLFAHLAAADLLVTFVVMPL. The Extracellular segment spans residues 97–114; that stretch reads DATWNITVQWLAGDIACR. N101 is a glycosylation site (N-linked (GlcNAc...) asparagine). Residues C113 and C188 are joined by a disulfide bond. Residues 115–136 form a helical membrane-spanning segment; it reads TLMFLKLMAMYSAAFLPVVIGL. Topologically, residues 137 to 160 are cytoplasmic; it reads DRQAAVLNPLGSRSGVRKLLGAAW. The helical transmembrane segment at 161–178 threads the bilayer; it reads GLSFLLALPQLFLFHTVH. Residues 179 to 204 lie on the Extracellular side of the membrane; that stretch reads RAGPVPFTQCVTKGSFKARWQETTYN. A helical membrane pass occupies residues 205–224; the sequence is LFTFCCLFLLPLIAMAICYS. The Cytoplasmic segment spans residues 225–278; the sequence is RIVLSVSSPQTRKGSHAPAGEFALRRSFDNRPRVCLRALRLALLILLTFILCWT. Residues 279-297 traverse the membrane as a helical segment; it reads PYYLLGLWYWFSPTMLTEV. Topologically, residues 298 to 303 are extracellular; the sequence is PPSLSH. The chain crosses the membrane as a helical span at residues 304 to 323; sequence ILFLFGLLNAPLDPLLYGAF. Residues 324–379 lie on the Cytoplasmic side of the membrane; the sequence is TFGCRRGHQELSIDSSKEGSGRMLQQEIHALRQQEVQKTVTSRSAGETKGISITSI.

It belongs to the G-protein coupled receptor 1 family. Phosphorylated on the C-terminal cytoplasmic tail.

It is found in the cell membrane. In terms of biological role, receptor for gonadotropin releasing hormone II (GnRH II). This receptor mediates its action by association with G proteins that activate a phosphatidylinositol-calcium second messenger system. In Chlorocebus aethiops (Green monkey), this protein is Gonadotropin-releasing hormone II receptor (GNRHR2).